Reading from the N-terminus, the 263-residue chain is uncharacterized protein (263 aa).

The signal sequence occupies residues 1–22; that stretch reads MGYLKRLVLYIVIMVMSVFIIG. C23 carries N-palmitoyl cysteine lipidation. C23 carries the S-diacylglycerol cysteine lipid modification.

The protein belongs to the staphylococcal tandem lipoprotein family.

The protein localises to the cell membrane. This is an uncharacterized protein from Staphylococcus aureus (strain N315).